We begin with the raw amino-acid sequence, 214 residues long: MVAAVRVIGGETPLARYVLKVLRDRTTGFPEFRRYVRIAGSILAVYIAGELGWVEEEVETPLGAKAKELAPAGPVYLVGILGASLPMVEGFASMMPEARIALVAARRVEEPGRLKIEVYYSRLPRMFDGPAVVLDPMLATGKTVAEAVRLARDRGASKVVIGSIIASRQGVEYISSLYGDTPIYTLALDPELDENYFIVPGLGDAGDRALGVEP.

5-phospho-alpha-D-ribose 1-diphosphate is bound by residues Arg107 and Asp135 to Thr143. Residues Ile198 and Gly203–Ala205 contribute to the uracil site. 5-phospho-alpha-D-ribose 1-diphosphate is bound at residue Asp204.

This sequence belongs to the UPRTase family. Mg(2+) is required as a cofactor.

It catalyses the reaction UMP + diphosphate = 5-phospho-alpha-D-ribose 1-diphosphate + uracil. It functions in the pathway pyrimidine metabolism; UMP biosynthesis via salvage pathway; UMP from uracil: step 1/1. Allosterically activated by GTP. In terms of biological role, catalyzes the conversion of uracil and 5-phospho-alpha-D-ribose 1-diphosphate (PRPP) to UMP and diphosphate. In Aeropyrum pernix (strain ATCC 700893 / DSM 11879 / JCM 9820 / NBRC 100138 / K1), this protein is Uracil phosphoribosyltransferase.